Here is a 713-residue protein sequence, read N- to C-terminus: Ribosomal RNA large subunit methyltransferase K/L (713 aa).

The region spanning 43–154 (LLYRALLWSR…RDQVMLSLDL (112 aa)) is the THUMP domain.

Belongs to the methyltransferase superfamily. RlmKL family.

It localises to the cytoplasm. The catalysed reaction is guanosine(2445) in 23S rRNA + S-adenosyl-L-methionine = N(2)-methylguanosine(2445) in 23S rRNA + S-adenosyl-L-homocysteine + H(+). It carries out the reaction guanosine(2069) in 23S rRNA + S-adenosyl-L-methionine = N(2)-methylguanosine(2069) in 23S rRNA + S-adenosyl-L-homocysteine + H(+). Its function is as follows. Specifically methylates the guanine in position 2445 (m2G2445) and the guanine in position 2069 (m7G2069) of 23S rRNA. This Sodalis glossinidius (strain morsitans) protein is Ribosomal RNA large subunit methyltransferase K/L.